The chain runs to 70 residues: Conotoxin ba3a (70 aa).

The N-terminal stretch at 1 to 20 (MLKIGVMLSIILVLFPLATL) is a signal peptide. Residues 21–55 (QLVAERPAAERYAENKQDLNPDERRNYLVDLGVER) constitute a propeptide that is removed on maturation.

Expressed by the venom duct.

It localises to the secreted. This chain is Conotoxin ba3a, found in Conus bayani (Bayan's cone).